Here is a 419-residue protein sequence, read N- to C-terminus: MSNKQITAVRGTTDWFDQAMILFNAISHKIIALSDLYTFQRIKTPVFEHAELFSRNLEHSDIVKKELYQLIDRSERKLALRPEGTASIIRAVNEHKLLDQNPWPLKLYYLEPMFRYERPQKGRMREFYQYGIELVGELDQLDYLQTILFAKKILDTFNFDCVLNINWLGNFASRKCWVEQLNQYFKQYQDQLSELSVSRLDSYGVLRILDDKNESKKDFVRSAPTIDQFISLEEQTQFKQLLEQLDQLGIKYKYNSSLVRGLDYYSELVFEFILANNDQAQSTLIGGGCYQNLIAELTNKPLKAIGFALSIERFISYLDDKTKDSLINQDQKPRYLLINLVPNKELATLNLSQELINHNYQVYYQHKLNKVDKAIKYALRAKFTHLIIMGNDEWSKQTMTIKDLSSQTQQTIKYKEFIK.

The protein belongs to the class-II aminoacyl-tRNA synthetase family. In terms of assembly, homodimer.

Its subcellular location is the cytoplasm. The catalysed reaction is tRNA(His) + L-histidine + ATP = L-histidyl-tRNA(His) + AMP + diphosphate + H(+). This chain is Histidine--tRNA ligase, found in Mycoplasmoides gallisepticum (strain R(low / passage 15 / clone 2)) (Mycoplasma gallisepticum).